A 587-amino-acid chain; its full sequence is MKRTWNVCLTALLSVLLVAGSVPFHAEAKKPPKSYDEYKQVDVGKDGMVATAHALASEIGADVLKKGGNAIDAAVAIQFALNVTEPMMSGIGGGGFMMVYDGKTKDTTIIDSRERAPAGATPDMFLDENGKAIPFSERVTKGTAVGVPGTLKGLEEALDKWGTRSMKLLITLTIKLAEKGFPIDSVLADAISDYQEKLSRTAAKDVFLPNGEPLKEGDTLIQKDLAKTFKLIRSKGTDAFYKGKFAKTLSDTVQDFGGSMTEKDLENYDITIDEPIWGDYQGYQIATTPPPSSGGIFLLQMLKILDDFNLSQYDVRSWEKYQLLAETMHLSYADRASYAGDPEFVNVPLKGLLHPDYIKERQQLINLDQVNKKPKAGDPWKYQEGSANYKQVEQPKDKVEGQTTHFTVADRWGNVVSYTTTIEQLFGTGIMVPDYGVILNNELTDFDAIPGGANEVQPNKRPLSSMTPTILFKDDKPVLTVGSPGGATIISSVLQTILYHIEYGMGLKAAVEEPRIYTTSMSSYRYEDGVPKDVLSKLNGMGHRFGTSPVDIGNVQSISIDHENGTFKGVVISGSNDAAIGINLKRK.

The first 28 residues, 1–28, serve as a signal peptide directing secretion; it reads MKRTWNVCLTALLSVLLVAGSVPFHAEA. Positions 29–35 are excised as a propeptide; sequence KKPPKSY. Arg-113 is a binding site for L-glutamate. The active-site Nucleophile is Thr-403. L-glutamate-binding positions include Thr-421, Glu-423, Glu-442, Asp-445, 464–465, and 485–486; these read SS and GG.

The protein belongs to the gamma-glutamyltransferase family. In terms of assembly, this enzyme consists of two polypeptide chains, which are synthesized in precursor form from a single polypeptide. Post-translationally, cleaved by autocatalysis into a large and small subunit.

The protein resides in the secreted. It carries out the reaction an N-terminal (5-L-glutamyl)-[peptide] + an alpha-amino acid = 5-L-glutamyl amino acid + an N-terminal L-alpha-aminoacyl-[peptide]. It catalyses the reaction glutathione + H2O = L-cysteinylglycine + L-glutamate. The catalysed reaction is an S-substituted glutathione + H2O = an S-substituted L-cysteinylglycine + L-glutamate. It participates in sulfur metabolism; glutathione metabolism. Its activity is regulated as follows. Inhibited by glucose. Cleaves the gamma-glutamyl bond of extracellular glutathione (gamma-Glu-Cys-Gly), glutathione conjugates, and other gamma-glutamyl compounds. The metabolism of glutathione releases free glutamate and the dipeptide cysteinyl-glycine, which is hydrolyzed to cysteine and glycine by dipeptidases. Uses glutamine as a gamma-glutamyl donor and acceptor for gamma-polyglutamic acid synthesis. Dipeptides are better gamma-glutamyl acceptors than free amino acids. In Bacillus subtilis subsp. natto, this protein is Glutathione hydrolase proenzyme (ggt).